Consider the following 644-residue polypeptide: uncharacterized protein (644 aa).

A disordered region spans residues 123-644 (VSQQIQHDQH…AVGKKKPTKK (522 aa)). Positions 133–155 (PQYNKHPQNNHHPQNTQHSQNNP) are enriched in low complexity. Over residues 159 to 174 (NINESENKEDLSDRSS) the composition is skewed to basic and acidic residues. Residues 175–191 (DSANSEESHNSQYSQDS) show a composition bias toward polar residues. Positions 192–204 (GDSRNYQDSEDNK) are enriched in basic and acidic residues. A compositionally biased stretch (polar residues) spans 216–233 (NKLIVQRLTNPKITPDTI). Composition is skewed to basic and acidic residues over residues 236-249 (SNKDSNKDLNKDLS) and 256-279 (SIKDKSKGPSKNLSKDSSKNKSKE). Acidic residues-rich tracts occupy residues 292–301 (DGDDLDDLGN) and 310–338 (SDYEDSDQDAISENPSDFDEDDSDDDDSN). A compositionally biased stretch (low complexity) spans 367–400 (KSPSNSKKSKTNQKLSQSSKKISSKTITNSGSKS). Positions 447–476 (SDDSDNESDNESDNESNNDSDNETDSEIDD) are enriched in acidic residues. Over residues 496-531 (PKTPMKPNNKTTSVSKPVSKPPVKSSIKNNTKNNKP) the composition is skewed to low complexity. The segment covering 544-558 (KQKDQSESQSDKDID) has biased composition (basic and acidic residues). The span at 585 to 594 (PPKSVSLPSS) shows a compositional bias: low complexity. Polar residues predominate over residues 607–630 (TAKTQNKSKSQPKTNGSKTSTKSI).

This is an uncharacterized protein from Acanthamoeba polyphaga mimivirus (APMV).